We begin with the raw amino-acid sequence, 259 residues long: Ribonuclease PH (259 aa).

Residues Arg88 and 126–128 (GTR) contribute to the phosphate site.

It belongs to the RNase PH family. Homohexameric ring arranged as a trimer of dimers.

The enzyme catalyses tRNA(n+1) + phosphate = tRNA(n) + a ribonucleoside 5'-diphosphate. Phosphorolytic 3'-5' exoribonuclease that plays an important role in tRNA 3'-end maturation. Removes nucleotide residues following the 3'-CCA terminus of tRNAs; can also add nucleotides to the ends of RNA molecules by using nucleoside diphosphates as substrates, but this may not be physiologically important. Probably plays a role in initiation of 16S rRNA degradation (leading to ribosome degradation) during starvation. The polypeptide is Ribonuclease PH (Mycobacterium leprae (strain Br4923)).